The primary structure comprises 227 residues: Ion-translocating oxidoreductase complex subunit E (227 aa).

A run of 6 helical transmembrane segments spans residues 18-38, 39-59, 69-89, 93-113, 125-145, and 182-202; these read ALVQ…VTNA, LGLG…VSLV, IPVF…LMNA, GLYL…IIIG, LPAV…LVLL, and HFLL…LIAL.

This sequence belongs to the NqrDE/RnfAE family. The complex is composed of six subunits: RnfA, RnfB, RnfC, RnfD, RnfE and RnfG.

It is found in the cell inner membrane. Part of a membrane-bound complex that couples electron transfer with translocation of ions across the membrane. This is Ion-translocating oxidoreductase complex subunit E from Aliivibrio fischeri (strain MJ11) (Vibrio fischeri).